Reading from the N-terminus, the 266-residue chain is HLA class II histocompatibility antigen, DR beta 3 chain (266 aa).

A signal peptide spans 1–29 (MVCLKLPGGSSLAALTVTLMVLSSRLAFA). The tract at residues 30-124 (GDTRPRFLEL…GESFTVQRRV (95 aa)) is beta-1. Residues 30 to 227 (GDTRPRFLEL…RARSESAQSK (198 aa)) are Extracellular-facing. 2 disulfides stabilise this stretch: Cys-44–Cys-108 and Cys-146–Cys-202. Residue Asn-48 is glycosylated (N-linked (GlcNAc...) asparagine). The beta-2 stretch occupies residues 125 to 227 (HPQVTVYPAK…RARSESAQSK (103 aa)). One can recognise an Ig-like C1-type domain in the interval 126–214 (PQVTVYPAKT…EHPSVTSALT (89 aa)). Residues 228-248 (MLSGVGGFVLGLLFLGAGLFI) traverse the membrane as a helical segment. The Cytoplasmic segment spans residues 249 to 266 (YFRNQKGHSGLQPTGFLS).

Belongs to the MHC class II family. As to quaternary structure, heterotrimer that consists of an alpha chain HLA-DRA, a beta chain HLA-DRB1 and a peptide (peptide-MHCII). Newly synthesized alpha and beta chains forms a heterodimer (MHCII) that associates with the CD74/invariant chain (Ii) in the endoplasmic reticulum (ER). Ii is a trimer composed of three subunits and each subunit interacts with one MHCII dimer, blocking the peptide-binding cleft. As a result, MHCII molecules cannot bind peptides present in the ER. The complex of MHCII and CD74/Ii is transported in vesicles from ER to Golgi to lysosomes, where it encounters antigenic peptides generated via proteolysis of endocytosed antigens. MHCII dimers are dissociated from CD74/Ii by the combined action of proteolysis and HLA-DM. Lysosomal enzymes such as cathepsin, degrade CD74/Ii leaving a 24 amino acid remnant called class II-associated Ii or CLIP. Interacts (via the peptide binding cleft) with CLIP; this interaction inhibits antigen peptide binding before entry in the endosomal compartment. The displacement of CLIP and replacement by a high affinity peptide in lysosomes is performed by HLA-DM heterodimer. HLA-DM catalyzes CLIP dissociation from MHCII, stabilizes empty MHCII and mediates the selection of high affinity peptides. Interacts with HLA-DM heterodimer; this interaction is direct. Interacts with TCR (via CDR3). Interacts (via beta-2 domain) with CD4 coreceptor (via Ig-like V-type domain); this interaction is of exceptionally low affinity yet necessary for optimal recognition of antigenic peptides. Post-translationally, ubiquitinated by MARCHF1 and MARCHF8 at Lys-254 leading to sorting into the endosome system and down-regulation of MHC class II. In terms of tissue distribution, expressed in professional APCs: monocyte/macrophages, dendritic cells and B cells (at protein level).

Its subcellular location is the cell membrane. The protein localises to the endoplasmic reticulum membrane. The protein resides in the lysosome membrane. It is found in the late endosome membrane. It localises to the autolysosome membrane. Functionally, a beta chain of antigen-presenting major histocompatibility complex class II (MHCII) molecule. In complex with the alpha chain HLA-DRA, displays antigenic peptides on professional antigen presenting cells (APCs) for recognition by alpha-beta T cell receptor (TCR) on HLA-DRB3-restricted CD4-positive T cells. This guides antigen-specific T-helper effector functions, both antibody-mediated immune response and macrophage activation, to ultimately eliminate the infectious agents and transformed cells. Typically presents extracellular peptide antigens of 10 to 30 amino acids that arise from proteolysis of endocytosed antigens in lysosomes. In the tumor microenvironment, presents antigenic peptides that are primarily generated in tumor-resident APCs likely via phagocytosis of apoptotic tumor cells or macropinocytosis of secreted tumor proteins. Presents peptides derived from intracellular proteins that are trapped in autolysosomes after macroautophagy, a mechanism especially relevant for T cell selection in the thymus and central immune tolerance. The selection of the immunodominant epitopes follows two processing modes: 'bind first, cut/trim later' for pathogen-derived antigenic peptides and 'cut first, bind later' for autoantigens/self-peptides. The anchor residue at position 1 of the peptide N-terminus, usually a large hydrophobic residue, is essential for high affinity interaction with MHCII molecules. In terms of biological role, ALLELE DRB3*01:01: Exclusively presents several immunogenic epitopes derived from C.tetani neurotoxin tetX, playing a significant role in immune recognition and long-term protection. Presents viral epitopes derived from HHV-6B U11, TRX2/U56 and U85 antigens to polyfunctional CD4-positive T cells with cytotoxic activity implicated in control of HHV-6B infection. ALLELE DRB3*02:02 Exclusively presents several immunogenic epitopes derived from C.tetani neurotoxin tetX, playing a significant role in immune recognition and long-term protection. Upon EBV infection, presents to CD4-positive T cells latent antigen EBNA2 (PRSPTVFYNIPPMPLPPSQL) and lytic antigen BZLF1 (LTAYHVSTAPTGSWF) peptides, driving oligoclonal expansion and selection of virus-specific memory T cell subsets with cytotoxic potential to directly eliminate virus-infected B cells. Presents viral epitopes derived from HHV-6B U11, gB/U39 and gH/U48 antigens to polyfunctional CD4-positive T cells with cytotoxic activity implicated in control of HHV-6B infection. Plays a minor role in CD4-positive T cell immune response against Dengue virus by presenting conserved peptides from capsid and non-structural NS3 proteins. Displays peptides derived from IAV matrix protein M, implying a role in protection against IAV infection. In the context of tumor immunesurveillance, may present to T-helper 1 cells an immunogenic epitope derived from tumor-associated antigen WT1 (KRYFKLSHLQMHSRKH), likely providing for effective antitumor immunity in a wide range of solid and hematological malignancies. Presents to Vbeta2-positive T-helper 1 cells specifically an immunodominant peptide derived from tumor antigen CTAG1A/NY-ESO-1(PGVLLKEFTVSGNILTIRLTAADHR) and confers protective memory response. In metastatic epithelial tumors, presents to intratumoral CD4-positive T cells a TP53 neoantigen (HYNYMCNSSCMGSMNRRPILTIITL) carrying G245S hotspot driver mutation and may mediate tumor regression. Its function is as follows. ALLELE DRB3*03:01: Presents a series of conserved peptides derived from the M.tuberculosis PPE family of proteins, in particular PPE29 and PPE33, known to be highly immunogenic. Presents immunogenic epitopes derived from C.tetani neurotoxin tetX, playing a role in immune recognition and long-term protection. Displays immunodominant viral peptides from HCV non-structural protein NS2, as part of a broad range T-helper response to resolve infection. The polypeptide is HLA class II histocompatibility antigen, DR beta 3 chain (HLA-DRB3) (Homo sapiens (Human)).